The primary structure comprises 431 residues: Serine/threonine-protein kinase PknA (431 aa).

The Cytoplasmic segment spans residues 1 to 339; it reads MSPRVGVTLS…RRTFSSGQRA (339 aa). The Protein kinase domain occupies 13–272; the sequence is YRLQRLIATG…SGGPFADAVA (260 aa). ATP-binding positions include 19-27 and K42; that span reads IATGGMGQV. The active-site Proton acceptor is the D141. A disordered region spans residues 276-333; it reads AGRRPPRPSQTPPPGRAAPAAIPSGTTARVAANSAGRTAASRRSRPATGGHRPPRRTF. Positions 282–291 are enriched in pro residues; the sequence is RPSQTPPPGR. Positions 292–314 are enriched in low complexity; the sequence is AAPAAIPSGTTARVAANSAGRTA. The chain crosses the membrane as a helical span at residues 340–360; sequence LLWAAGVLGALAIIIAVLLVI. Over 361–431 the chain is Extracellular; it reads KAPGDNSPQQ…ASLARYEIAQ (71 aa). The tract at residues 366-418 is disordered; that stretch reads NSPQQAPTPTVTTTGNPPASNTGGTDASPRLNWTERGETRHSGLQSWVVPPTP. A compositionally biased stretch (low complexity) spans 368-384; that stretch reads PQQAPTPTVTTTGNPPA.

This sequence belongs to the protein kinase superfamily. Ser/Thr protein kinase family. In terms of processing, autophosphorylated.

The protein localises to the cell membrane. It carries out the reaction L-seryl-[protein] + ATP = O-phospho-L-seryl-[protein] + ADP + H(+). It catalyses the reaction L-threonyl-[protein] + ATP = O-phospho-L-threonyl-[protein] + ADP + H(+). Its function is as follows. Protein kinase that regulates many aspects of mycobacterial physiology. Is a key component of a signal transduction pathway that regulates cell growth, cell shape and cell division via phosphorylation of target proteins. This chain is Serine/threonine-protein kinase PknA (pknA), found in Mycobacterium bovis (strain ATCC BAA-935 / AF2122/97).